A 31-amino-acid chain; its full sequence is Cytochrome b6-f complex subunit 6 (31 aa).

The chain crosses the membrane as a helical span at residues 4-26 (LTSYFGFLLAALTITSALFIGLN).

The protein belongs to the PetL family. As to quaternary structure, the 4 large subunits of the cytochrome b6-f complex are cytochrome b6, subunit IV (17 kDa polypeptide, PetD), cytochrome f and the Rieske protein, while the 4 small subunits are PetG, PetL, PetM and PetN. The complex functions as a dimer.

The protein resides in the plastid. It localises to the chloroplast thylakoid membrane. In terms of biological role, component of the cytochrome b6-f complex, which mediates electron transfer between photosystem II (PSII) and photosystem I (PSI), cyclic electron flow around PSI, and state transitions. PetL is important for photoautotrophic growth as well as for electron transfer efficiency and stability of the cytochrome b6-f complex. The chain is Cytochrome b6-f complex subunit 6 from Amaranthus caudatus (Love-lies-bleeding).